A 350-amino-acid chain; its full sequence is Protein pelota homolog (350 aa).

Belongs to the eukaryotic release factor 1 family. Pelota subfamily. As to quaternary structure, monomer. A divalent metal cation is required as a cofactor.

It is found in the cytoplasm. In terms of biological role, may function in recognizing stalled ribosomes, interact with stem-loop structures in stalled mRNA molecules, and effect endonucleolytic cleavage of the mRNA. May play a role in the release non-functional ribosomes and degradation of damaged mRNAs. Has endoribonuclease activity. This Methanosarcina barkeri (strain Fusaro / DSM 804) protein is Protein pelota homolog.